Reading from the N-terminus, the 332-residue chain is Holliday junction branch migration complex subunit RuvB (332 aa).

The interval Met-1–Tyr-181 is large ATPase domain (RuvB-L). Residues Leu-20, Arg-21, Gly-62, Lys-65, Thr-66, Thr-67, Glu-128 to Phe-130, Arg-171, Tyr-181, and Arg-218 each bind ATP. Thr-66 lines the Mg(2+) pocket. The interval Glu-182–Asp-252 is small ATPAse domain (RuvB-S). The segment at His-255–Lys-332 is head domain (RuvB-H). Residues Arg-291, Arg-310, Arg-312, and Arg-315 each contribute to the DNA site.

The protein belongs to the RuvB family. As to quaternary structure, homohexamer. Forms an RuvA(8)-RuvB(12)-Holliday junction (HJ) complex. HJ DNA is sandwiched between 2 RuvA tetramers; dsDNA enters through RuvA and exits via RuvB. An RuvB hexamer assembles on each DNA strand where it exits the tetramer. Each RuvB hexamer is contacted by two RuvA subunits (via domain III) on 2 adjacent RuvB subunits; this complex drives branch migration. In the full resolvosome a probable DNA-RuvA(4)-RuvB(12)-RuvC(2) complex forms which resolves the HJ.

It is found in the cytoplasm. It catalyses the reaction ATP + H2O = ADP + phosphate + H(+). Functionally, the RuvA-RuvB-RuvC complex processes Holliday junction (HJ) DNA during genetic recombination and DNA repair, while the RuvA-RuvB complex plays an important role in the rescue of blocked DNA replication forks via replication fork reversal (RFR). RuvA specifically binds to HJ cruciform DNA, conferring on it an open structure. The RuvB hexamer acts as an ATP-dependent pump, pulling dsDNA into and through the RuvAB complex. RuvB forms 2 homohexamers on either side of HJ DNA bound by 1 or 2 RuvA tetramers; 4 subunits per hexamer contact DNA at a time. Coordinated motions by a converter formed by DNA-disengaged RuvB subunits stimulates ATP hydrolysis and nucleotide exchange. Immobilization of the converter enables RuvB to convert the ATP-contained energy into a lever motion, pulling 2 nucleotides of DNA out of the RuvA tetramer per ATP hydrolyzed, thus driving DNA branch migration. The RuvB motors rotate together with the DNA substrate, which together with the progressing nucleotide cycle form the mechanistic basis for DNA recombination by continuous HJ branch migration. Branch migration allows RuvC to scan DNA until it finds its consensus sequence, where it cleaves and resolves cruciform DNA. The sequence is that of Holliday junction branch migration complex subunit RuvB from Streptococcus agalactiae serotype V (strain ATCC BAA-611 / 2603 V/R).